The primary structure comprises 947 residues: Bifunctional glutamine synthetase adenylyltransferase/adenylyl-removing enzyme (947 aa).

Positions M1 to E440 are adenylyl removase. The adenylyl transferase stretch occupies residues S450–V947.

This sequence belongs to the GlnE family. Mg(2+) serves as cofactor.

The enzyme catalyses [glutamine synthetase]-O(4)-(5'-adenylyl)-L-tyrosine + phosphate = [glutamine synthetase]-L-tyrosine + ADP. It catalyses the reaction [glutamine synthetase]-L-tyrosine + ATP = [glutamine synthetase]-O(4)-(5'-adenylyl)-L-tyrosine + diphosphate. In terms of biological role, involved in the regulation of glutamine synthetase GlnA, a key enzyme in the process to assimilate ammonia. When cellular nitrogen levels are high, the C-terminal adenylyl transferase (AT) inactivates GlnA by covalent transfer of an adenylyl group from ATP to specific tyrosine residue of GlnA, thus reducing its activity. Conversely, when nitrogen levels are low, the N-terminal adenylyl removase (AR) activates GlnA by removing the adenylyl group by phosphorolysis, increasing its activity. The regulatory region of GlnE binds the signal transduction protein PII (GlnB) which indicates the nitrogen status of the cell. In Salmonella paratyphi A (strain ATCC 9150 / SARB42), this protein is Bifunctional glutamine synthetase adenylyltransferase/adenylyl-removing enzyme.